A 952-amino-acid chain; its full sequence is Isoleucine--tRNA ligase (952 aa).

The 'HIGH' region motif lies at 58–68 (PYANGDIHIGH). E576 is an L-isoleucyl-5'-AMP binding site. The short motif at 617-621 (KMSKS) is the 'KMSKS' region element. K620 contributes to the ATP binding site. Positions 915, 918, 935, and 938 each coordinate Zn(2+).

Belongs to the class-I aminoacyl-tRNA synthetase family. IleS type 1 subfamily. Monomer. The cofactor is Zn(2+).

The protein resides in the cytoplasm. It carries out the reaction tRNA(Ile) + L-isoleucine + ATP = L-isoleucyl-tRNA(Ile) + AMP + diphosphate. Its function is as follows. Catalyzes the attachment of isoleucine to tRNA(Ile). As IleRS can inadvertently accommodate and process structurally similar amino acids such as valine, to avoid such errors it has two additional distinct tRNA(Ile)-dependent editing activities. One activity is designated as 'pretransfer' editing and involves the hydrolysis of activated Val-AMP. The other activity is designated 'posttransfer' editing and involves deacylation of mischarged Val-tRNA(Ile). The polypeptide is Isoleucine--tRNA ligase (Aliivibrio fischeri (strain MJ11) (Vibrio fischeri)).